Consider the following 609-residue polypeptide: NADH-ubiquinone oxidoreductase chain 5 (609 aa).

15 consecutive transmembrane segments (helical) span residues serine 6–leucine 26, tyrosine 35–phenylalanine 55, tyrosine 84–serine 104, arginine 116–phenylalanine 138, leucine 140–glycine 160, alanine 171–leucine 191, threonine 240–isoleucine 260, isoleucine 272–leucine 292, isoleucine 300–asparagine 319, threonine 330–asparagine 350, methionine 365–leucine 385, methionine 409–valine 429, leucine 456–isoleucine 476, methionine 481–leucine 501, and glycine 581–histidine 601.

The protein belongs to the complex I subunit 5 family. In terms of assembly, core subunit of respiratory chain NADH dehydrogenase (Complex I) which is composed of 45 different subunits.

The protein resides in the mitochondrion inner membrane. It catalyses the reaction a ubiquinone + NADH + 5 H(+)(in) = a ubiquinol + NAD(+) + 4 H(+)(out). Core subunit of the mitochondrial membrane respiratory chain NADH dehydrogenase (Complex I) which catalyzes electron transfer from NADH through the respiratory chain, using ubiquinone as an electron acceptor. Essential for the catalytic activity and assembly of complex I. This chain is NADH-ubiquinone oxidoreductase chain 5, found in Rattus norvegicus (Rat).